We begin with the raw amino-acid sequence, 540 residues long: Chaperonin GroEL (540 aa).

Residues 29 to 32, 86 to 90, G413, 476 to 478, and D492 each bind ATP; these read TLGP, DGTTT, and NAA.

Belongs to the chaperonin (HSP60) family. In terms of assembly, forms a cylinder of 14 subunits composed of two heptameric rings stacked back-to-back. Interacts with the co-chaperonin GroES.

The protein localises to the cytoplasm. The enzyme catalyses ATP + H2O + a folded polypeptide = ADP + phosphate + an unfolded polypeptide.. In terms of biological role, together with its co-chaperonin GroES, plays an essential role in assisting protein folding. The GroEL-GroES system forms a nano-cage that allows encapsulation of the non-native substrate proteins and provides a physical environment optimized to promote and accelerate protein folding. The sequence is that of Chaperonin GroEL from Streptococcus anginosus.